The primary structure comprises 795 residues: Antibiotic resistant DNA gyrase subunit B (795 aa).

The 116-residue stretch at 421 to 536 (SELYLVEGNS…RGYIYIAQPP (116 aa)) folds into the Toprim domain. Mg(2+) contacts are provided by Glu427, Asp501, and Asp503.

The protein belongs to the type II topoisomerase GyrB family. Heterotetramer, composed of two GyrA and two GyrB chains. In the heterotetramer, GyrA contains the active site tyrosine that forms a transient covalent intermediate with DNA, while GyrB binds cofactors and catalyzes ATP hydrolysis. It depends on Mg(2+) as a cofactor. Requires Mn(2+) as cofactor. Ca(2+) is required as a cofactor.

It is found in the cytoplasm. The catalysed reaction is ATP-dependent breakage, passage and rejoining of double-stranded DNA.. Functionally, a type II topoisomerase that negatively supercoils closed circular double-stranded (ds) DNA in an ATP-dependent manner to modulate DNA topology and maintain chromosomes in an underwound state. Negative supercoiling favors strand separation, and DNA replication, transcription, recombination and repair, all of which involve strand separation. Also able to catalyze the interconversion of other topological isomers of dsDNA rings, including catenanes and knotted rings. Type II topoisomerases break and join 2 DNA strands simultaneously in an ATP-dependent manner. This Neisseria gonorrhoeae protein is Antibiotic resistant DNA gyrase subunit B.